Reading from the N-terminus, the 111-residue chain is uncharacterized protein (111 aa).

Transmembrane regions (helical) follow at residues 22-42, 48-68, and 75-95; these read ASLI…ANIT, LTPA…VSVL, and VLVT…PKIL.

It localises to the membrane. This is an uncharacterized protein from Saccharomyces cerevisiae (strain ATCC 204508 / S288c) (Baker's yeast).